The chain runs to 523 residues: Lysine--tRNA ligase (523 aa).

The short motif at 30 to 38 (PSGYVHVGN) is the 'HIGH' region element. Zn(2+) is bound by residues Asp95, Cys99, His100, His106, Cys177, His180, Cys199, and His203. Residues 279–283 (KMSGS) carry the 'KMSKS' region motif.

It belongs to the class-I aminoacyl-tRNA synthetase family. Zn(2+) serves as cofactor.

The protein localises to the cytoplasm. It catalyses the reaction tRNA(Lys) + L-lysine + ATP = L-lysyl-tRNA(Lys) + AMP + diphosphate. This Pyrococcus horikoshii (strain ATCC 700860 / DSM 12428 / JCM 9974 / NBRC 100139 / OT-3) protein is Lysine--tRNA ligase (lysS).